A 339-amino-acid polypeptide reads, in one-letter code: Dihydroorotate dehydrogenase (quinone) (339 aa).

Residues 61 to 65 (AGLDK) and Thr85 each bind FMN. Lys65 is a binding site for substrate. 110–114 (NRMGF) lines the substrate pocket. FMN-binding residues include Asn138 and Asn171. Asn171 contacts substrate. The Nucleophile role is filled by Ser174. Asn176 lines the substrate pocket. 2 residues coordinate FMN: Lys216 and Thr244. 245-246 (NT) lines the substrate pocket. Residues Gly267, Gly296, and 317–318 (YS) contribute to the FMN site.

Belongs to the dihydroorotate dehydrogenase family. Type 2 subfamily. As to quaternary structure, monomer. The cofactor is FMN.

It localises to the cell membrane. It carries out the reaction (S)-dihydroorotate + a quinone = orotate + a quinol. It participates in pyrimidine metabolism; UMP biosynthesis via de novo pathway; orotate from (S)-dihydroorotate (quinone route): step 1/1. Its function is as follows. Catalyzes the conversion of dihydroorotate to orotate with quinone as electron acceptor. The sequence is that of Dihydroorotate dehydrogenase (quinone) from Pseudomonas fluorescens (strain ATCC BAA-477 / NRRL B-23932 / Pf-5).